A 271-amino-acid chain; its full sequence is Glutamate racemase (271 aa).

Substrate-binding positions include 10–11 (DS) and 42–43 (YG). Cys73 serves as the catalytic Proton donor/acceptor. A substrate-binding site is contributed by 74–75 (NT). Cys183 serves as the catalytic Proton donor/acceptor. 184–185 (TH) is a binding site for substrate.

The protein belongs to the aspartate/glutamate racemases family.

The enzyme catalyses L-glutamate = D-glutamate. Its pathway is cell wall biogenesis; peptidoglycan biosynthesis. Provides the (R)-glutamate required for cell wall biosynthesis. The polypeptide is Glutamate racemase (Lactococcus lactis subsp. cremoris (strain MG1363)).